The sequence spans 226 residues: Leucyl/phenylalanyl-tRNA--protein transferase (226 aa).

The protein belongs to the L/F-transferase family.

The protein localises to the cytoplasm. The enzyme catalyses N-terminal L-lysyl-[protein] + L-leucyl-tRNA(Leu) = N-terminal L-leucyl-L-lysyl-[protein] + tRNA(Leu) + H(+). The catalysed reaction is N-terminal L-arginyl-[protein] + L-leucyl-tRNA(Leu) = N-terminal L-leucyl-L-arginyl-[protein] + tRNA(Leu) + H(+). It catalyses the reaction L-phenylalanyl-tRNA(Phe) + an N-terminal L-alpha-aminoacyl-[protein] = an N-terminal L-phenylalanyl-L-alpha-aminoacyl-[protein] + tRNA(Phe). Functionally, functions in the N-end rule pathway of protein degradation where it conjugates Leu, Phe and, less efficiently, Met from aminoacyl-tRNAs to the N-termini of proteins containing an N-terminal arginine or lysine. The protein is Leucyl/phenylalanyl-tRNA--protein transferase of Pseudomonas aeruginosa (strain UCBPP-PA14).